The following is a 116-amino-acid chain: Large ribosomal subunit protein bL17 (116 aa).

Belongs to the bacterial ribosomal protein bL17 family. In terms of assembly, part of the 50S ribosomal subunit. Contacts protein L32.

The polypeptide is Large ribosomal subunit protein bL17 (Synechococcus sp. (strain CC9311)).